Here is a 913-residue protein sequence, read N- to C-terminus: Translation initiation factor IF-2 (913 aa).

A disordered region spans residues 1 to 322; that stretch reads MTDNNDDKTL…QEKFRRSQMQ (322 aa). Positions 60–113 are enriched in low complexity; it reads VQPVVAAPKPAAPAPVAARPQAPQPRIHQPGGQQQRPGSSQSQQRSGSSAPQQR. Over residues 131–180 the composition is skewed to basic and acidic residues; sequence MEARRRALMEAQARDVVEAKQRAEDEARRKVEEEQRIAAEKMEAANRAAE. Low complexity-rich tracts occupy residues 181–195, 203–238, and 261–277; these read EAAA…PAAE, ERPA…AAAP, and PARG…PAAR. In terms of domain architecture, tr-type G spans 411–578; it reads SRPPVVTIMG…AILLQAEILD (168 aa). A G1 region spans residues 420–427; sequence GHVDHGKT. Position 420 to 427 (420 to 427) interacts with GTP; it reads GHVDHGKT. Residues 445 to 449 form a G2 region; that stretch reads GITQH. The tract at residues 466–469 is G3; the sequence is DTPG. GTP is bound by residues 466-470 and 520-523; these read DTPGH and NKID. The G4 stretch occupies residues 520 to 523; that stretch reads NKID. Positions 556–558 are G5; the sequence is SAK.

This sequence belongs to the TRAFAC class translation factor GTPase superfamily. Classic translation factor GTPase family. IF-2 subfamily.

It localises to the cytoplasm. Functionally, one of the essential components for the initiation of protein synthesis. Protects formylmethionyl-tRNA from spontaneous hydrolysis and promotes its binding to the 30S ribosomal subunits. Also involved in the hydrolysis of GTP during the formation of the 70S ribosomal complex. The polypeptide is Translation initiation factor IF-2 (Agrobacterium fabrum (strain C58 / ATCC 33970) (Agrobacterium tumefaciens (strain C58))).